Here is a 176-residue protein sequence, read N- to C-terminus: Cathelicidin-2 (176 aa).

An N-terminal signal peptide occupies residues 1 to 29; the sequence is METQRASLSLGRCSLWLLLLGLVLPSASA. Q30 carries the post-translational modification Pyrrolidone carboxylic acid. Positions 30-130 are excised as a propeptide; it reads QALSYREAVL…DINCNELQSV (101 aa). 2 cysteine pairs are disulfide-bonded: C85/C96 and C107/C124. Residues 157–176 form a disordered region; the sequence is IFPPIRPPFRPPLGPFPGRR. P173 carries the proline amide modification. Residues 174-176 constitute a propeptide, removed in mature form; that stretch reads GRR.

Belongs to the cathelicidin family. Elastase is responsible for its maturation. In terms of tissue distribution, large granules of neutrophils.

The protein resides in the secreted. Its function is as follows. Exerts, in vitro, a potent antimicrobial activity. Probably due to an impairment of the function of the respiratory chain and of energy-dependent activities in the inner membrane of susceptible microorganisms. The polypeptide is Cathelicidin-2 (CATHL2) (Bos taurus (Bovine)).